We begin with the raw amino-acid sequence, 285 residues long: Vesicle-associated membrane protein 725 (285 aa).

The Cytoplasmic portion of the chain corresponds to 1-261; that stretch reads MDRSVVPISL…MWFENMKIKL (261 aa). Residues 75–179 enclose the Longin domain; that stretch reads FVARGTVILV…SLNREFGSKL (105 aa). Residues 195-255 form the v-SNARE coiled-coil homology domain; the sequence is KLAKVKAQVT…TKIRRKMWFE (61 aa). A helical; Anchor for type IV membrane protein transmembrane segment spans residues 262-282; it reads IVLGIIITLILIIILSVCGGF. Over 283–285 the chain is Vesicular; it reads KCT.

The protein belongs to the synaptobrevin family. Expressed in flowers, leaves, stems and roots.

It localises to the cell membrane. The protein localises to the early endosome membrane. In terms of biological role, involved in the targeting and/or fusion of transport vesicles to their target membrane. The chain is Vesicle-associated membrane protein 725 from Arabidopsis thaliana (Mouse-ear cress).